The primary structure comprises 313 residues: Olfactory receptor 4E2 (313 aa).

At 1-25 the chain is on the extracellular side; that stretch reads MDSLNQTRVTEFVFLGLTDNRVLEM. N5 carries an N-linked (GlcNAc...) asparagine glycan. A helical membrane pass occupies residues 26 to 49; sequence LFFMAFSAIYMLTLSGNILIIIAT. The Cytoplasmic segment spans residues 50–57; sequence VFTPSLHT. The chain crosses the membrane as a helical span at residues 58 to 79; the sequence is PMYFFLSNLSFIDICHSSVTVP. Topologically, residues 80 to 100 are extracellular; sequence KMLEGLLLERKTISFDNCITQ. Cysteines 97 and 179 form a disulfide. A helical membrane pass occupies residues 101 to 120; it reads LFFLHLFACAEIFLLIIVAY. H105 and C109 together coordinate Cu cation. The Cytoplasmic segment spans residues 121-139; it reads DRYVAICTPLHYPNVMNMR. Residues 140-158 form a helical membrane-spanning segment; that stretch reads VCIQLVFALWLGGTVHSLG. Over 159–195 the chain is Extracellular; sequence QTFLTIRLPYCGPNIIDSYFCDVPLVIKLACTDTYLT. Residues 196–219 form a helical membrane-spanning segment; sequence GILIVTNSGTISLSCFLAVVTSYM. Residues 220-235 are Cytoplasmic-facing; sequence VILVSLRKHSAEGRQK. A helical membrane pass occupies residues 236-258; it reads ALSTCSAHFMVVALFFGPCIFIY. Over 259–269 the chain is Extracellular; sequence TRPDTSFSIDK. R260 contributes to the Cu cation binding site. The chain crosses the membrane as a helical span at residues 270–289; it reads VVSVFYTVVTPLLNPFIYTL. Topologically, residues 290 to 313 are cytoplasmic; that stretch reads RNEEVKSAMKQLRQRQVFFTKSYT.

Belongs to the G-protein coupled receptor 1 family.

The protein localises to the cell membrane. With respect to regulation, copper binding enhances receptor activity in response to odorant binding. Functionally, olfactory receptor that is activated by the binding of organosulfur odorants with thioether groups such as (methylthio)methanethiol (MTMT) and bis(methylthiomethyl) disulfide. Also binds odorants cis-cyclooctene and tert-butyl mercaptan. The activity of this receptor is mediated by G proteins which activate adenylyl cyclase. The chain is Olfactory receptor 4E2 from Homo sapiens (Human).